A 374-amino-acid chain; its full sequence is GDSL esterase/lipase At3g50400 (374 aa).

A signal peptide spans 1-26; that stretch reads MKKSIFFVPVLVLFFFGSRFSRVASA. Serine 41 serves as the catalytic Nucleophile. N-linked (GlcNAc...) asparagine glycans are attached at residues asparagine 104 and asparagine 125. Catalysis depends on residues aspartate 339 and histidine 342.

The protein belongs to the 'GDSL' lipolytic enzyme family.

It is found in the secreted. The protein is GDSL esterase/lipase At3g50400 of Arabidopsis thaliana (Mouse-ear cress).